Consider the following 191-residue polypeptide: Holliday junction branch migration complex subunit RuvA (191 aa).

The tract at residues 1–64 (MIGSITGNVE…DNITQLYGFL (64 aa)) is domain I. Positions 65 to 142 (NRQEQDYFKM…KMPIEETFSI (78 aa)) are domain II. The interval 143–146 (IEND) is flexible linker. Positions 146-191 (DDSLAALISLGYEKLKAFNVIQEIKSKTPDASTQEVIRKALQKLSQ) are domain III.

The protein belongs to the RuvA family. In terms of assembly, homotetramer. Forms an RuvA(8)-RuvB(12)-Holliday junction (HJ) complex. HJ DNA is sandwiched between 2 RuvA tetramers; dsDNA enters through RuvA and exits via RuvB. An RuvB hexamer assembles on each DNA strand where it exits the tetramer. Each RuvB hexamer is contacted by two RuvA subunits (via domain III) on 2 adjacent RuvB subunits; this complex drives branch migration. In the full resolvosome a probable DNA-RuvA(4)-RuvB(12)-RuvC(2) complex forms which resolves the HJ.

It is found in the cytoplasm. The RuvA-RuvB-RuvC complex processes Holliday junction (HJ) DNA during genetic recombination and DNA repair, while the RuvA-RuvB complex plays an important role in the rescue of blocked DNA replication forks via replication fork reversal (RFR). RuvA specifically binds to HJ cruciform DNA, conferring on it an open structure. The RuvB hexamer acts as an ATP-dependent pump, pulling dsDNA into and through the RuvAB complex. HJ branch migration allows RuvC to scan DNA until it finds its consensus sequence, where it cleaves and resolves the cruciform DNA. This is Holliday junction branch migration complex subunit RuvA from Ehrlichia ruminantium (strain Gardel).